The following is a 343-amino-acid chain: MQEHYYKFWREMIKPKGFEVDRDSLRDDYAKFIIRPLERGFGVTLGNSLRRILLSSMMGSAITAVKFEGVLHEFTTIPDVLEDVTDIILNLKEVRFKQYTADSLTLKISKKGPGKVTAADIQTTDKIEVLNPDLPIATLGANANFNAEIVVSFGRGYVPVENRETDLPVGFIGVDALYSPIRKVNYNVSNARVGQRTDYDALTLEVWTDGSLKPEEAVALSSKIMKEQLQIFLTFDETMEPAEEARELGSPTLNENLFRSVDDLELSVRSANCLKNANIRYIGELVVRSEAEMLKTKNFGRKSLNEIKEILGEMGLGLGMKIEGWPPAGWDPSQPPQKRETQQ.

Positions 1–236 (MQEHYYKFWR…EQLQIFLTFD (236 aa)) are alpha N-terminal domain (alpha-NTD). Positions 253–343 (LNENLFRSVD…QPPQKRETQQ (91 aa)) are alpha C-terminal domain (alpha-CTD).

The protein belongs to the RNA polymerase alpha chain family. As to quaternary structure, homodimer. The RNAP catalytic core consists of 2 alpha, 1 beta, 1 beta' and 1 omega subunit. When a sigma factor is associated with the core the holoenzyme is formed, which can initiate transcription.

It carries out the reaction RNA(n) + a ribonucleoside 5'-triphosphate = RNA(n+1) + diphosphate. In terms of biological role, DNA-dependent RNA polymerase catalyzes the transcription of DNA into RNA using the four ribonucleoside triphosphates as substrates. The polypeptide is DNA-directed RNA polymerase subunit alpha (Bdellovibrio bacteriovorus (strain ATCC 15356 / DSM 50701 / NCIMB 9529 / HD100)).